Reading from the N-terminus, the 591-residue chain is Potassium-transporting ATPase potassium-binding subunit (591 aa).

Transmembrane regions (helical) follow at residues 6–26 (WFQILLFLGLILAVTKPLGVF), 63–83 (WTEYAIAMLLFSAVSMLMLYI), 137–157 (GLAYHNFMSAAVGIAIAIAFI), 179–199 (VLWVLLPFCIMGALALVSQGV), 272–292 (LSNLIEMFSIFAISAGLTYTL), 303–323 (WAVWGAMAALFLVGVSVVYWA), 405–425 (AGMYGMLIYIVLAVFIAGLMV), 444–464 (AMLVALIFPLIILVFSAISSV), 510–530 (VAIGIAMLGGRFLMIIPMLAI), and 553–573 (LFSVLLIGTIIIIGALTFFPA).

This sequence belongs to the KdpA family. In terms of assembly, the system is composed of three essential subunits: KdpA, KdpB and KdpC.

The protein localises to the cell inner membrane. Its function is as follows. Part of the high-affinity ATP-driven potassium transport (or Kdp) system, which catalyzes the hydrolysis of ATP coupled with the electrogenic transport of potassium into the cytoplasm. This subunit binds the periplasmic potassium ions and delivers the ions to the membrane domain of KdpB through an intramembrane tunnel. The sequence is that of Potassium-transporting ATPase potassium-binding subunit from Koribacter versatilis (strain Ellin345).